A 98-amino-acid polypeptide reads, in one-letter code: Small ribosomal subunit protein bS6 (98 aa).

It belongs to the bacterial ribosomal protein bS6 family.

Its function is as follows. Binds together with bS18 to 16S ribosomal RNA. The polypeptide is Small ribosomal subunit protein bS6 (Moorella thermoacetica (strain ATCC 39073 / JCM 9320)).